Here is a 210-residue protein sequence, read N- to C-terminus: Ion-translocating oxidoreductase complex subunit G (210 aa).

Residues 9–29 (SLVLALFAIAATALVTITYAL) traverse the membrane as a helical segment. The residue at position 176 (T176) is an FMN phosphoryl threonine.

Belongs to the RnfG family. In terms of assembly, the complex is composed of six subunits: RnfA, RnfB, RnfC, RnfD, RnfE and RnfG. The cofactor is FMN.

It is found in the cell inner membrane. Its function is as follows. Part of a membrane-bound complex that couples electron transfer with translocation of ions across the membrane. The protein is Ion-translocating oxidoreductase complex subunit G of Aliivibrio fischeri (strain ATCC 700601 / ES114) (Vibrio fischeri).